The primary structure comprises 94 residues: Evasin P1086 (94 aa).

A signal peptide spans 1-28 (MAFNVITFLQLAVFVVILFNINLHSASA). Disulfide bonds link Cys48–Cys67, Cys52–Cys69, and Cys63–Cys80. N-linked (GlcNAc...) asparagine glycosylation is present at Asn74.

It localises to the secreted. Functionally, salivary chemokine-binding protein which binds to host chemokines CXCL1, CXCL2, CXCL3, CXCL5, CXCL6, CXCL10, CXCL12 and CXCL13. The chain is Evasin P1086 from Ixodes ricinus (Common tick).